Consider the following 392-residue polypeptide: Bone morphogenetic protein 15 (392 aa).

A signal peptide spans 1-25 (MALLTILRILLWGVVLFMEQRVQMA). The propeptide occupies 26 to 267 (KPGWPSTALL…ESSFLMRSVR (242 aa)). Residues N85, N213, N236, N349, and N373 are each glycosylated (N-linked (GlcNAc...) asparagine). Disulfide bonds link C291–C357, C320–C389, and C324–C391.

The protein belongs to the TGF-beta family. Homodimer. But, in contrast to other members of this family, cannot be disulfide-linked. Ovary specific.

The protein resides in the secreted. Functionally, may be involved in follicular development. Oocyte-specific growth/differentiation factor that stimulates folliculogenesis and granulosa cell (GC) growth. This Mus musculus (Mouse) protein is Bone morphogenetic protein 15 (Bmp15).